We begin with the raw amino-acid sequence, 179 residues long: Large ribosomal subunit protein uL6 (179 aa).

Belongs to the universal ribosomal protein uL6 family. Part of the 50S ribosomal subunit.

Functionally, this protein binds to the 23S rRNA, and is important in its secondary structure. It is located near the subunit interface in the base of the L7/L12 stalk, and near the tRNA binding site of the peptidyltransferase center. In Rhodococcus erythropolis (strain PR4 / NBRC 100887), this protein is Large ribosomal subunit protein uL6.